Here is a 251-residue protein sequence, read N- to C-terminus: Cell division protein ZapD (251 aa).

Belongs to the ZapD family. As to quaternary structure, interacts with FtsZ.

The protein resides in the cytoplasm. Functionally, cell division factor that enhances FtsZ-ring assembly. Directly interacts with FtsZ and promotes bundling of FtsZ protofilaments, with a reduction in FtsZ GTPase activity. The protein is Cell division protein ZapD of Burkholderia cenocepacia (strain HI2424).